Reading from the N-terminus, the 182-residue chain is Large ribosomal subunit protein bL25 (182 aa).

The protein belongs to the bacterial ribosomal protein bL25 family. CTC subfamily. In terms of assembly, part of the 50S ribosomal subunit; part of the 5S rRNA/L5/L18/L25 subcomplex. Contacts the 5S rRNA. Binds to the 5S rRNA independently of L5 and L18.

This is one of the proteins that binds to the 5S RNA in the ribosome where it forms part of the central protuberance. This chain is Large ribosomal subunit protein bL25, found in Borrelia garinii subsp. bavariensis (strain ATCC BAA-2496 / DSM 23469 / PBi) (Borreliella bavariensis).